The sequence spans 952 residues: Glutamate receptor 2.7 (952 aa).

The signal sequence occupies residues 1-32; it reads MKVMNPRKTNNTFMYYFVLFVCGFVLMEGCLG. Residues 33–582 are Extracellular-facing; it reads QNQTTEIKVG…NTWVFLRPWS (550 aa). N-linked (GlcNAc...) asparagine glycans are attached at residues Asn34, Asn60, Asn355, Asn428, and Asn546. The chain crosses the membrane as a helical span at residues 583–603; the sequence is LDLWVTTACFFVFIGFIVWIL. The Cytoplasmic segment spans residues 604–612; sequence EHRVNTDFR. Residues 613–633 form a helical membrane-spanning segment; that stretch reads GPPHHQIGTSFWFAFSTMNFA. At 634–637 the chain is on the cytoplasmic side; that stretch reads HREK. Residues 638-658 form a helical membrane-spanning segment; sequence VVSNLARFVVLVWCFVVLVLI. The Extracellular segment spans residues 659–821; sequence QSYTANLTSF…LSSNHLSLSS (163 aa). N-linked (GlcNAc...) asparagine glycosylation is found at Asn664, Asn728, Asn748, Asn784, and Asn809. A helical membrane pass occupies residues 822–842; the sequence is FWGLFLIAGIASFLALLIFVA. Residues 843–952 are Cytoplasmic-facing; that stretch reads NFLYEHKHTL…ESAIIQCEGE (110 aa). Residues 889 to 908 show a composition bias toward polar residues; sequence VSSPITQGSSSPLTDQSTPL. 2 disordered regions span residues 889–914 and 932–952; these read VSSP…SPEQ and FTTQ…CEGE.

This sequence belongs to the glutamate-gated ion channel (TC 1.A.10.1) family. As to quaternary structure, may form heteromers. Expressed predominantly in leaves.

The protein resides in the membrane. Its function is as follows. Glutamate-gated receptor that probably acts as a non-selective cation channel. May be involved in light-signal transduction and calcium homeostasis via the regulation of calcium influx into cells. This chain is Glutamate receptor 2.7 (GLR2.7), found in Arabidopsis thaliana (Mouse-ear cress).